A 196-amino-acid chain; its full sequence is Rac-like GTP-binding protein ARAC5 (196 aa).

16–21 (AVGKTC) lines the GTP pocket. Positions 35-43 (YVPTVFDNF) match the Effector region motif. Residues 119 to 121 (KLD) and 159 to 161 (SSK) each bind GTP. Cysteine methyl ester is present on Cys-193. Cys-193 carries the S-geranylgeranyl cysteine lipid modification. The propeptide at 194-196 (VFL) is removed in mature form.

The protein belongs to the small GTPase superfamily. Rho family. As to quaternary structure, interacts with GDI1 and ROPGEF8 homodimer. Binds to SPK1. In terms of tissue distribution, ubiquitous. Preferentially expressed at the tip of root hairs.

It is found in the cytoplasm. The protein resides in the membrane. It localises to the cell membrane. Its function is as follows. Involved in cell polarity control during the actin-dependent tip growth of root hairs, thus regulating root hair length and root hair initiation. Inactive GDP-bound Rho GTPases reside in the cytosol, are found in a complex with Rho GDP-dissociation inhibitors (Rho GDIs), and are released from the GDI protein in order to translocate to membranes upon activation. The sequence is that of Rac-like GTP-binding protein ARAC5 from Arabidopsis thaliana (Mouse-ear cress).